Consider the following 562-residue polypeptide: Terpene synthase 2 (562 aa).

D315, D319, D459, and E467 together coordinate Mg(2+). The short motif at 315–319 (DDEYD) is the DDXXD motif element.

Belongs to the terpene synthase family. Tpsa subfamily. Mg(2+) serves as cofactor. The cofactor is Mn(2+). In terms of tissue distribution, expressed at low levels in stems, leaves, roots and fruits.

The enzyme catalyses (2E,6E)-farnesyl diphosphate = delta-cadinene + diphosphate. It catalyses the reaction (2E,6E)-farnesyl diphosphate = alpha-cadinene + diphosphate. It carries out the reaction (2E,6E)-farnesyl diphosphate + H2O = (-)-delta-cadinol + diphosphate. Its pathway is secondary metabolite biosynthesis; terpenoid biosynthesis. Its function is as follows. Sesquiterpene synthase involved in the biosynthesis of volatile compounds that contribute to the characteristic flavors of black pepper. Mediates the conversion of (2E,6E)-farnesyl diphosphate (FPP) into alpha-cadinene, delta-cadinene and delta-cadinol. This chain is Terpene synthase 2, found in Piper nigrum (Black pepper).